The primary structure comprises 86 residues: Small ribosomal subunit protein bS20 (86 aa).

Over residues 1–16 (MANIKSQEKRIRTNER) the composition is skewed to basic and acidic residues. Residues 1 to 25 (MANIKSQEKRIRTNERRRLRNQSVK) form a disordered region.

The protein belongs to the bacterial ribosomal protein bS20 family.

Binds directly to 16S ribosomal RNA. The protein is Small ribosomal subunit protein bS20 of Mycobacterium sp. (strain JLS).